The primary structure comprises 174 residues: FMN reductase (NADH) RutF (174 aa).

Belongs to the non-flavoprotein flavin reductase family. RutF subfamily.

It catalyses the reaction FMNH2 + NAD(+) = FMN + NADH + 2 H(+). Catalyzes the reduction of FMN to FMNH2 which is used to reduce pyrimidine by RutA via the Rut pathway. The protein is FMN reductase (NADH) RutF of Agrobacterium fabrum (strain C58 / ATCC 33970) (Agrobacterium tumefaciens (strain C58)).